A 325-amino-acid chain; its full sequence is Casein kinase I isoform alpha (325 aa).

Ala2 is modified (N-acetylalanine). Phosphoserine is present on Ser4. Position 8 is an N6-acetyllysine (Lys8). Residues Tyr17–Phe285 form the Protein kinase domain. Residues Ile23–Ile31 and Lys46 each bind ATP. The active-site Proton acceptor is the Asp136.

This sequence belongs to the protein kinase superfamily. CK1 Ser/Thr protein kinase family. Casein kinase I subfamily. Interacts with the Axin complex. Interacts with TUT1, leading to TUT1 phosphorylation. Interacts with FAM83A, FAM83B, FAM83C, FAM83D, FAM83E, FAM83F, FAM83G and FAM83H (via DUF1669). Interaction with FAM83H recruits CSNK1A1 to keratin filaments. In terms of processing, phosphorylated by MTOR in response to mitogenic stimulation, leading to its activation.

It localises to the cytoplasm. It is found in the cytoskeleton. The protein localises to the microtubule organizing center. Its subcellular location is the centrosome. The protein resides in the chromosome. It localises to the centromere. It is found in the kinetochore. The protein localises to the nucleus speckle. Its subcellular location is the cilium basal body. The protein resides in the spindle. It catalyses the reaction L-seryl-[protein] + ATP = O-phospho-L-seryl-[protein] + ADP + H(+). It carries out the reaction L-threonyl-[protein] + ATP = O-phospho-L-threonyl-[protein] + ADP + H(+). Its function is as follows. Casein kinases are operationally defined by their preferential utilization of acidic proteins such as caseins as substrates. Can phosphorylate a large number of proteins. Participates in Wnt signaling. Phosphorylates CTNNB1 at 'Ser-45'. May phosphorylate PER1 and PER2. May play a role in segregating chromosomes during mitosis. May play a role in keratin cytoskeleton disassembly and thereby, it may regulate epithelial cell migration. Acts as a positive regulator of mTORC1 and mTORC2 signaling in response to nutrients by mediating phosphorylation of DEPTOR inhibitor. Acts as an inhibitor of NLRP3 inflammasome assembly by mediating phosphorylation of NLRP3. The polypeptide is Casein kinase I isoform alpha (CSNK1A1) (Oryctolagus cuniculus (Rabbit)).